Reading from the N-terminus, the 231-residue chain is Large ribosomal subunit protein uL1 (231 aa).

Belongs to the universal ribosomal protein uL1 family. Part of the 50S ribosomal subunit.

In terms of biological role, binds directly to 23S rRNA. The L1 stalk is quite mobile in the ribosome, and is involved in E site tRNA release. Its function is as follows. Protein L1 is also a translational repressor protein, it controls the translation of the L11 operon by binding to its mRNA. The protein is Large ribosomal subunit protein uL1 of Buchnera aphidicola subsp. Acyrthosiphon pisum (strain 5A).